Consider the following 233-residue polypeptide: Ribonuclease 3 (233 aa).

The 123-residue stretch at 4–126 folds into the RNase III domain; the sequence is LNKLMERLGH…IVGSIYIDAG (123 aa). Residue Glu-39 participates in Mg(2+) binding. The active site involves Asp-43. The Mg(2+) site is built by Asp-112 and Glu-115. Glu-115 is a catalytic residue. The region spanning 153-222 is the DRBM domain; it reads DAKSLLQEWL…AKRFLELLDD (70 aa).

It belongs to the ribonuclease III family. As to quaternary structure, homodimer. It depends on Mg(2+) as a cofactor.

The protein localises to the cytoplasm. The enzyme catalyses Endonucleolytic cleavage to 5'-phosphomonoester.. Functionally, digests double-stranded RNA. Involved in the processing of primary rRNA transcript to yield the immediate precursors to the large and small rRNAs (23S and 16S). Processes some mRNAs, and tRNAs when they are encoded in the rRNA operon. Processes pre-crRNA and tracrRNA of type II CRISPR loci if present in the organism. This Coxiella burnetii (strain CbuG_Q212) (Coxiella burnetii (strain Q212)) protein is Ribonuclease 3.